A 582-amino-acid polypeptide reads, in one-letter code: Ubiquilin-1 (582 aa).

Disordered regions lie at residues 1–26 and 102–136; these read MAESAESGGPPGAQDSAADSGPAEPK and RPQDNSAQQTNTTGNSVTSSPAPDSNPTSGPAANS. A2 carries the N-acetylalanine modification. Residues 28-102 enclose the Ubiquitin-like domain; that stretch reads MKVTVKTPKE…VHLVIKTQNR (75 aa). Over residues 102–135 the composition is skewed to polar residues; sequence RPQDNSAQQTNTTGNSVTSSPAPDSNPTSGPAAN. The segment at 169–422 is interaction with UBXN4; it reads QLLSNPEMMV…LNNPLFAGNP (254 aa). 2 STI1 domains span residues 173 to 201 and 203 to 242; these read NPEMMVQIMENPFVQSMLSNPDLMRQLIM and NPQMQQLIQRNPEISHMLNNPNIMRQTLELARNPAMMQEM. The interval 285–365 is disordered; that stretch reads NPFASLVSSP…NLVPGAGASM (81 aa). Positions 290-304 are enriched in polar residues; the sequence is LVSSPSSAEGTQPSR. A compositionally biased stretch (low complexity) spans 318–346; sequence QTPQSSPASGSTGSTTNTVSTSAGNATST. STI1 domains are found at residues 381-428 and 432-464; these read NPQL…QEQM and LPTFLQQMQNPDTLSAMSNPRAMQALLQIQQGL. A disordered region spans residues 481-513; it reads GLAAGNSGGPAGTTAPSTAPGEDTNPQGGAAEP. Residues 539-579 enclose the UBA domain; the sequence is RFQQQLEQLSAMGFLNREANLQALIATGGDINAAIERLLGS.

Monomer and homodimer. Heterodimer with UBQLN2. Binds CD47. Binds NBL1. Binds GABRA1, GABRA2, GABRA3, GABRA6, GABRB1, GABRB2 and GABRB3. Binds UBE3A, BTRC, P4HB and MTOR. Interacts with the proteasome 19S subunit. Interacts (via ubiquitin-like domain) with TREX1; the interaction is direct and may control TREX1 subcellular location. Forms a complex with UBXN4 and VCP. Interacts (via UBA domain) with UBQLN4 (via ubiquitin-like domain). Found in a complex with UBQLN2 and MAP1LC3A/B/C. The monomeric form interacts with PSEN1 and PSEN2. Interacts with ORAI1. Interacts (via UBA domain) with TICAM1. Interacts with EPS15. Interacts (via UBA domain) with UBA52 and (via ubiquitin-like domain) with PSMD3 and PSMD4. Interacts with HERPUD1. Interacts with MAP1LC3A/B/C in the presence of UBQLN4. Interacts (via ubiquitin-like domain) with EPS15 (via UIM domains) and both the ubiquitinated and non-ubiquitinated forms can interact with EPS15. Interacts (via ubiquitin-like domain) with EPS15L1, HGS (via UIM domain) and STAM2 (via UIM domain). Interacts with BCL2L10/BCL-B; in the cytoplasm. Post-translationally, degraded during both macroautophagy and during chaperone-mediated autophagy (CMA). Phosphorylated. In terms of processing, ubiquitinated.

Its subcellular location is the nucleus. It is found in the cytoplasm. The protein localises to the endoplasmic reticulum. It localises to the cytoplasmic vesicle. The protein resides in the autophagosome. Its subcellular location is the cell membrane. Its function is as follows. Plays an important role in the regulation of different protein degradation mechanisms and pathways including ubiquitin-proteasome system (UPS), autophagy and endoplasmic reticulum-associated protein degradation (ERAD) pathway. Mediates the proteasomal targeting of misfolded or accumulated proteins for degradation by binding (via UBA domain) to their polyubiquitin chains and by interacting (via ubiquitin-like domain) with the subunits of the proteasome. Plays a role in the ERAD pathway via its interaction with ER-localized proteins UBXN4, VCP and HERPUD1 and may form a link between the polyubiquitinated ERAD substrates and the proteasome. Plays a role in unfolded protein response (UPR) by attenuating the induction of UPR-inducible genes, DDTI3/CHOP, HSPA5 and PDIA2 during ER stress. Involved in the regulation of macroautophagy and autophagosome formation; required for maturation of autophagy-related protein LC3 from the cytosolic form LC3-I to the membrane-bound form LC3-II and may assist in the maturation of autophagosomes to autolysosomes by mediating autophagosome-lysosome fusion. Negatively regulates the TICAM1/TRIF-dependent toll-like receptor signaling pathway by decreasing the abundance of TICAM1 via the autophagic pathway. Promotes the ubiquitination and lysosomal degradation of ORAI1, consequently down-regulating the ORAI1-mediated Ca2+ mobilization. Suppresses the maturation and proteasomal degradation of amyloid beta A4 protein (A4) by stimulating the lysine 63 (K63)-linked polyubiquitination. Delays the maturation of A4 by sequestering it in the Golgi apparatus and preventing its transport to the cell surface for subsequent processing. Promotes the surface expression of GABA-A receptors. Ubiquitinates BCL2L10 and thereby stabilizes protein abundance. In Rattus norvegicus (Rat), this protein is Ubiquilin-1 (Ubqln1).